Here is a 183-residue protein sequence, read N- to C-terminus: Large ribosomal subunit protein uL6 (183 aa).

The protein belongs to the universal ribosomal protein uL6 family. In terms of assembly, part of the 50S ribosomal subunit.

Its function is as follows. This protein binds to the 23S rRNA, and is important in its secondary structure. It is located near the subunit interface in the base of the L7/L12 stalk, and near the tRNA binding site of the peptidyltransferase center. This chain is Large ribosomal subunit protein uL6, found in Chlamydia trachomatis serovar L2 (strain ATCC VR-902B / DSM 19102 / 434/Bu).